Here is a 503-residue protein sequence, read N- to C-terminus: Cobyric acid synthase (503 aa).

One can recognise a GATase cobBQ-type domain in the interval 260 to 453; sequence KIGVAAIYFP…FHALFDESSV (194 aa). C341 functions as the Nucleophile in the catalytic mechanism. The active site involves H445.

Belongs to the CobB/CobQ family. CobQ subfamily.

It participates in cofactor biosynthesis; adenosylcobalamin biosynthesis. Its function is as follows. Catalyzes amidations at positions B, D, E, and G on adenosylcobyrinic A,C-diamide. NH(2) groups are provided by glutamine, and one molecule of ATP is hydrogenolyzed for each amidation. The protein is Cobyric acid synthase of Pelodictyon phaeoclathratiforme (strain DSM 5477 / BU-1).